Reading from the N-terminus, the 394-residue chain is Chaperone protein DnaJ (394 aa).

Positions 4-68 (DYYEILGVSR…ELRARYDRFG (65 aa)) constitute a J domain. The CR-type zinc finger occupies 136 to 218 (GGEKQIRISH…CNGEGLAQTT (83 aa)). Residues cysteine 149, cysteine 152, cysteine 166, cysteine 169, cysteine 192, cysteine 195, cysteine 206, and cysteine 209 each contribute to the Zn(2+) site. 4 CXXCXGXG motif repeats span residues 149–156 (CPVCGGSG), 166–173 (CPTCGGAG), 192–199 (CPTCGGAG), and 206–213 (CYNCNGEG).

Belongs to the DnaJ family. In terms of assembly, homodimer. Zn(2+) is required as a cofactor.

The protein localises to the cytoplasm. Functionally, participates actively in the response to hyperosmotic and heat shock by preventing the aggregation of stress-denatured proteins and by disaggregating proteins, also in an autonomous, DnaK-independent fashion. Unfolded proteins bind initially to DnaJ; upon interaction with the DnaJ-bound protein, DnaK hydrolyzes its bound ATP, resulting in the formation of a stable complex. GrpE releases ADP from DnaK; ATP binding to DnaK triggers the release of the substrate protein, thus completing the reaction cycle. Several rounds of ATP-dependent interactions between DnaJ, DnaK and GrpE are required for fully efficient folding. Also involved, together with DnaK and GrpE, in the DNA replication of plasmids through activation of initiation proteins. This is Chaperone protein DnaJ from Synechococcus sp. (strain JA-3-3Ab) (Cyanobacteria bacterium Yellowstone A-Prime).